Reading from the N-terminus, the 948-residue chain is RNA polymerase-associated protein RapA (948 aa).

The region spanning 164–332 (EVADRIAPRV…FARLRLLDPN (169 aa)) is the Helicase ATP-binding domain. Position 177–184 (177–184 (DEVGLGKT)) interacts with ATP. The DEAH box motif lies at 278 to 281 (DEAH). Positions 473–627 (RVEWLIDQLK…TCPTGNALQH (155 aa)) constitute a Helicase C-terminal domain.

Belongs to the SNF2/RAD54 helicase family. RapA subfamily. Interacts with the RNAP. Has a higher affinity for the core RNAP than for the holoenzyme. Its ATPase activity is stimulated by binding to RNAP.

Transcription regulator that activates transcription by stimulating RNA polymerase (RNAP) recycling in case of stress conditions such as supercoiled DNA or high salt concentrations. Probably acts by releasing the RNAP, when it is trapped or immobilized on tightly supercoiled DNA. Does not activate transcription on linear DNA. Probably not involved in DNA repair. In Pseudomonas fluorescens (strain Pf0-1), this protein is RNA polymerase-associated protein RapA.